A 313-amino-acid chain; its full sequence is tRNA dimethylallyltransferase (313 aa).

17 to 24 (GPTASGKT) contacts ATP. Residue 19 to 24 (TASGKT) coordinates substrate. 3 interaction with substrate tRNA regions span residues 42–45 (DSAL), 166–170 (QRLSR), and 247–252 (RCVGYR).

This sequence belongs to the IPP transferase family. In terms of assembly, monomer. It depends on Mg(2+) as a cofactor.

The catalysed reaction is adenosine(37) in tRNA + dimethylallyl diphosphate = N(6)-dimethylallyladenosine(37) in tRNA + diphosphate. Functionally, catalyzes the transfer of a dimethylallyl group onto the adenine at position 37 in tRNAs that read codons beginning with uridine, leading to the formation of N6-(dimethylallyl)adenosine (i(6)A). The protein is tRNA dimethylallyltransferase of Serratia proteamaculans (strain 568).